We begin with the raw amino-acid sequence, 182 residues long: Translation initiation factor IF-3 (182 aa).

The disordered stretch occupies residues 1–22 (MPLGDCNISTPDNKQNRKNQEI).

It belongs to the IF-3 family. In terms of assembly, monomer.

The protein resides in the cytoplasm. Its function is as follows. IF-3 binds to the 30S ribosomal subunit and shifts the equilibrium between 70S ribosomes and their 50S and 30S subunits in favor of the free subunits, thus enhancing the availability of 30S subunits on which protein synthesis initiation begins. In Xanthomonas campestris pv. campestris (strain ATCC 33913 / DSM 3586 / NCPPB 528 / LMG 568 / P 25), this protein is Translation initiation factor IF-3.